The following is a 681-amino-acid chain: DNA ligase (681 aa).

Residues 45–49, 94–95, and glutamate 120 each bind NAD(+); these read DFDFD and SL. Lysine 122 serves as the catalytic N6-AMP-lysine intermediate. NAD(+) is bound by residues arginine 143, glutamate 177, lysine 289, and lysine 313. 4 residues coordinate Zn(2+): cysteine 403, cysteine 406, cysteine 421, and cysteine 426. One can recognise a BRCT domain in the interval 593–681; that stretch reads SDQQPFAGQS…SLKINFKNTI (89 aa).

This sequence belongs to the NAD-dependent DNA ligase family. LigA subfamily. Mg(2+) is required as a cofactor. It depends on Mn(2+) as a cofactor.

It carries out the reaction NAD(+) + (deoxyribonucleotide)n-3'-hydroxyl + 5'-phospho-(deoxyribonucleotide)m = (deoxyribonucleotide)n+m + AMP + beta-nicotinamide D-nucleotide.. DNA ligase that catalyzes the formation of phosphodiester linkages between 5'-phosphoryl and 3'-hydroxyl groups in double-stranded DNA using NAD as a coenzyme and as the energy source for the reaction. It is essential for DNA replication and repair of damaged DNA. In Leptospira borgpetersenii serovar Hardjo-bovis (strain JB197), this protein is DNA ligase.